We begin with the raw amino-acid sequence, 286 residues long: PTS system mannose-specific EIID component (286 aa).

Methionine 1 is subject to N-formylmethionine. At 1 to 17 (MSEMVDTTQTTTEKKLT) the chain is on the cytoplasmic side. Positions 14-284 (KKLTQSDIRG…GIAGYACGLL (271 aa)) constitute a PTS EIID domain. The stretch at 18 to 55 (QSDIRGVFLRSNLFQGSWNFERMQALGFCFSMVPAIRR) is an intramembrane region. At 56–62 (LYPENNE) the chain is on the cytoplasmic side. Residues 63 to 95 (ARKQAIRRHLEFFNTQPFVAAPILGVTLALEEQ) lie within the membrane without spanning it. Residues 96–103 (RANGAEID) lie on the Cytoplasmic side of the membrane. The segment at 104–143 (DGAINGIKVGLMGPLAGVGDPIFWGTVRPVFAALGAGIAM) is a transmembrane helix. The Periplasmic segment spans residues 144 to 147 (SGSL). The chain crosses the lipid bilayer at residues 148 to 176 (LGPLLFFILFNLVRLATRYYGVAYGYSKG). The Cytoplasmic portion of the chain corresponds to 177 to 186 (IDIVKDMGGG). A transmembrane helix spans residues 187 to 212 (FLQKLTEGASILGLFVMGALVNKWTH). Residues 213–244 (VNIPLVVSRITDQTGKEHVTTVQTILDQLMPG) lie on the Periplasmic side of the membrane. A transmembrane span lies at residues 245–258 (LVPLLLTFACMWLL). Over 259–264 (RKKVNP) the chain is Cytoplasmic. The chain crosses the lipid bilayer at residues 265 to 283 (LWIIVGFFVIGIAGYACGL). Over 284-286 (LGL) the chain is Periplasmic.

In terms of assembly, homotrimer of protomers that are composed of two subunits, IIC and IID.

It is found in the cell inner membrane. The phosphoenolpyruvate-dependent sugar phosphotransferase system (sugar PTS), a major carbohydrate active transport system, catalyzes the phosphorylation of incoming sugar substrates concomitantly with their translocation across the cell membrane. The enzyme II ManXYZ PTS system is involved in mannose transport. This Escherichia coli O6:H1 (strain CFT073 / ATCC 700928 / UPEC) protein is PTS system mannose-specific EIID component (manZ).